Reading from the N-terminus, the 188-residue chain is Inosine triphosphate pyrophosphatase (188 aa).

Residue 12 to 17 participates in ITP binding; it reads TGNKNK. Glu40 provides a ligand contact to Mg(2+). Residues Lys52, 68–69, Lys85, 144–147, Lys165, and 170–171 contribute to the ITP site; these read DT, FGWD, and HR.

Belongs to the HAM1 NTPase family. Homodimer. It depends on Mg(2+) as a cofactor. Mn(2+) serves as cofactor.

The protein resides in the cytoplasm. Its subcellular location is the nucleus. The enzyme catalyses ITP + H2O = IMP + diphosphate + H(+). The catalysed reaction is dITP + H2O = dIMP + diphosphate + H(+). It carries out the reaction XTP + H2O = XMP + diphosphate + H(+). Its function is as follows. Pyrophosphatase that hydrolyzes non-canonical purine nucleotides such as inosine triphosphate (ITP), deoxyinosine triphosphate (dITP) or xanthosine 5'-triphosphate (XTP) to their respective monophosphate derivatives. The enzyme does not distinguish between the deoxy- and ribose forms. Probably excludes non-canonical purines from RNA and DNA precursor pools, thus preventing their incorporation into RNA and DNA and avoiding chromosomal lesions. This chain is Inosine triphosphate pyrophosphatase, found in Phaeosphaeria nodorum (strain SN15 / ATCC MYA-4574 / FGSC 10173) (Glume blotch fungus).